We begin with the raw amino-acid sequence, 470 residues long: UDP-N-acetylmuramoylalanine--D-glutamate ligase (470 aa).

ATP is bound at residue 121–127 (GTNGKST).

Belongs to the MurCDEF family.

It is found in the cytoplasm. It carries out the reaction UDP-N-acetyl-alpha-D-muramoyl-L-alanine + D-glutamate + ATP = UDP-N-acetyl-alpha-D-muramoyl-L-alanyl-D-glutamate + ADP + phosphate + H(+). The protein operates within cell wall biogenesis; peptidoglycan biosynthesis. Functionally, cell wall formation. Catalyzes the addition of glutamate to the nucleotide precursor UDP-N-acetylmuramoyl-L-alanine (UMA). The sequence is that of UDP-N-acetylmuramoylalanine--D-glutamate ligase from Rhizobium etli (strain ATCC 51251 / DSM 11541 / JCM 21823 / NBRC 15573 / CFN 42).